Consider the following 61-residue polypeptide: MALKIRQIKGTVGRKQNQRDTLRSLGLKRIGQEVIREDNSVTRGMVHTVRHLVEVEEVAGE.

This sequence belongs to the universal ribosomal protein uL30 family. In terms of assembly, part of the 50S ribosomal subunit.

This is Large ribosomal subunit protein uL30 from Corynebacterium urealyticum (strain ATCC 43042 / DSM 7109).